We begin with the raw amino-acid sequence, 457 residues long: NADH-quinone oxidoreductase subunit D (457 aa).

Positions 1 to 23 (MSTHTETPVDGSAETITGAQPYE) are disordered.

It belongs to the complex I 49 kDa subunit family. NDH-1 is composed of 14 different subunits. Subunits NuoB, C, D, E, F, and G constitute the peripheral sector of the complex.

It is found in the cell membrane. The enzyme catalyses a quinone + NADH + 5 H(+)(in) = a quinol + NAD(+) + 4 H(+)(out). Its function is as follows. NDH-1 shuttles electrons from NADH, via FMN and iron-sulfur (Fe-S) centers, to quinones in the respiratory chain. The immediate electron acceptor for the enzyme in this species is believed to be a menaquinone. Couples the redox reaction to proton translocation (for every two electrons transferred, four hydrogen ions are translocated across the cytoplasmic membrane), and thus conserves the redox energy in a proton gradient. This is NADH-quinone oxidoreductase subunit D from Parafrankia sp. (strain EAN1pec).